The chain runs to 908 residues: Protein translocase subunit SecA (908 aa).

Residues Gln87, 105-109, and Asp512 contribute to the ATP site; that span reads GEGKT. The disordered stretch occupies residues 860-908; it reads AESLVGSSDEHEAVTAQAPMIRDGEKVGRNDPCPCGSGRKYKQCHGKLS. 4 residues coordinate Zn(2+): Cys892, Cys894, Cys903, and His904. The span at 898 to 908 shows a compositional bias: basic residues; it reads RKYKQCHGKLS.

This sequence belongs to the SecA family. In terms of assembly, monomer and homodimer. Part of the essential Sec protein translocation apparatus which comprises SecA, SecYEG and auxiliary proteins SecDF-YajC and YidC. Zn(2+) is required as a cofactor.

The protein resides in the cell inner membrane. The protein localises to the cytoplasm. It catalyses the reaction ATP + H2O + cellular proteinSide 1 = ADP + phosphate + cellular proteinSide 2.. Its function is as follows. Part of the Sec protein translocase complex. Interacts with the SecYEG preprotein conducting channel. Has a central role in coupling the hydrolysis of ATP to the transfer of proteins into and across the cell membrane, serving both as a receptor for the preprotein-SecB complex and as an ATP-driven molecular motor driving the stepwise translocation of polypeptide chains across the membrane. This is Protein translocase subunit SecA from Shewanella baltica (strain OS155 / ATCC BAA-1091).